A 117-amino-acid polypeptide reads, in one-letter code: Immunoglobulin lambda variable 1-47 (117 aa).

The N-terminal stretch at Met-1–Ala-19 is a signal peptide. Pyrrolidone carboxylic acid is present on Gln-20. The framework-1 stretch occupies residues Gln-20–Ser-44. Positions Gln-20–Gly-117 constitute an Ig-like domain. Cys-41 and Cys-108 are oxidised to a cystine. Positions Ser-45–Tyr-52 are complementarity-determining-1. The interval Val-53–Tyr-69 is framework-2. The tract at residues Ser-70–Asn-72 is complementarity-determining-2. A framework-3 region spans residues Gln-73–Cys-108. The interval Ala-109–Gly-117 is complementarity-determining-3.

As to quaternary structure, immunoglobulins are composed of two identical heavy chains and two identical light chains; disulfide-linked.

Its subcellular location is the secreted. The protein localises to the cell membrane. Its function is as follows. V region of the variable domain of immunoglobulin light chains that participates in the antigen recognition. Immunoglobulins, also known as antibodies, are membrane-bound or secreted glycoproteins produced by B lymphocytes. In the recognition phase of humoral immunity, the membrane-bound immunoglobulins serve as receptors which, upon binding of a specific antigen, trigger the clonal expansion and differentiation of B lymphocytes into immunoglobulins-secreting plasma cells. Secreted immunoglobulins mediate the effector phase of humoral immunity, which results in the elimination of bound antigens. The antigen binding site is formed by the variable domain of one heavy chain, together with that of its associated light chain. Thus, each immunoglobulin has two antigen binding sites with remarkable affinity for a particular antigen. The variable domains are assembled by a process called V-(D)-J rearrangement and can then be subjected to somatic hypermutations which, after exposure to antigen and selection, allow affinity maturation for a particular antigen. This Homo sapiens (Human) protein is Immunoglobulin lambda variable 1-47.